The sequence spans 125 residues: Large ribosomal subunit protein bL19 (125 aa).

It belongs to the bacterial ribosomal protein bL19 family.

In terms of biological role, this protein is located at the 30S-50S ribosomal subunit interface and may play a role in the structure and function of the aminoacyl-tRNA binding site. The chain is Large ribosomal subunit protein bL19 from Synechococcus sp. (strain JA-2-3B'a(2-13)) (Cyanobacteria bacterium Yellowstone B-Prime).